We begin with the raw amino-acid sequence, 721 residues long: Dipeptidyl-peptidase 5 (721 aa).

Residues 1 to 18 form the signal peptide; that stretch reads MGAFRWLSIAAAASTALA. N-linked (GlcNAc...) asparagine glycans are attached at residues Asn-75, Asn-94, Asn-151, and Asn-254. The segment at 271-297 is disordered; sequence ARPINGPDSPGTPKGIKGDSSSPVFSP. Residues Asn-380 and Asn-450 are each glycosylated (N-linked (GlcNAc...) asparagine). Residue Ser-560 is the Charge relay system of the active site. A glycan (N-linked (GlcNAc...) asparagine) is linked at Asn-607. Residues Asp-643 and His-675 each act as charge relay system in the active site.

Belongs to the peptidase S9C family. Post-translationally, N-glycosylated. As to expression, expressed in mycelia and conidia.

It is found in the secreted. Functionally, may be involved in metabolism of dipeptides or may affect host defense mechanisms. Has a substrate specificity limited to the hydrolysis of X-Ala, His-Ser, and Ser-Tyr dipeptides at a neutral pH optimum. The protein is Dipeptidyl-peptidase 5 of Aspergillus fumigatus (strain CBS 144.89 / FGSC A1163 / CEA10) (Neosartorya fumigata).